The following is a 1687-amino-acid chain: A-kinase anchor protein SPHKAP (1687 aa).

The span at 1–14 (MDVNSRLSVQSNVE) shows a compositional bias: polar residues. Disordered regions lie at residues 1-25 (MDVN…PEPQ) and 272-293 (RKHR…ENTS). The tract at residues 914–931 (FAEELAETVVSMATEIAA) is PKA-RII subunit binding domain. The segment at 964–989 (LKRKKENSSAGSTVRKHKPPRLSEIK) is disordered. Phosphoserine occurs at positions 1010, 1070, 1092, 1105, 1106, 1109, 1244, and 1273. Disordered regions lie at residues 1363-1406 (VTEG…SPRR) and 1421-1520 (DQKE…PDDT). Residues 1366-1375 (GNHSPVSSPG) show a composition bias toward polar residues. Over residues 1382-1393 (KPSDFDPRRETS) the composition is skewed to basic and acidic residues. The span at 1461-1470 (TAPSTCQSSR) shows a compositional bias: polar residues. The segment covering 1482 to 1494 (EVLKEDIPRDESR) has biased composition (basic and acidic residues). The span at 1495 to 1508 (NPPSSSEESTGSWS) shows a compositional bias: low complexity.

It belongs to the AKAP110 family. Interacts (via the PKA-RII subunit binding domain) with the RI subunit of PKA. Interacts with SPHK1; the interaction greatly reduces SPHK1 activity.

It is found in the cytoplasm. Functionally, anchoring protein that binds preferentially to the type I regulatory subunit of c-AMP-dependent protein kinase (PKA type I) and targets it to distinct subcellular compartments. May act as a converging factor linking cAMP and sphingosine signaling pathways. Plays a regulatory role in the modulation of SPHK1. This Mus musculus (Mouse) protein is A-kinase anchor protein SPHKAP (Sphkap).